The sequence spans 334 residues: Protein-methionine-sulfoxide reductase catalytic subunit MsrP (334 aa).

Residues 1–44 (MKKIRPLTEADVTAESAFFMQRRQVLKALGISAAALSLPSTAQA) constitute a signal peptide (tat-type signal). Mo-molybdopterin-binding positions include Asn88, 91–92 (YE), Cys146, Thr181, Asn233, Arg238, and 249–251 (GIK).

Belongs to the MsrP family. In terms of assembly, heterodimer of a catalytic subunit (MsrP) and a heme-binding subunit (MsrQ). It depends on Mo-molybdopterin as a cofactor. Predicted to be exported by the Tat system. The position of the signal peptide cleavage has not been experimentally proven.

Its subcellular location is the periplasm. The enzyme catalyses L-methionyl-[protein] + a quinone + H2O = L-methionyl-(S)-S-oxide-[protein] + a quinol. The catalysed reaction is L-methionyl-[protein] + a quinone + H2O = L-methionyl-(R)-S-oxide-[protein] + a quinol. Its function is as follows. Part of the MsrPQ system that repairs oxidized periplasmic proteins containing methionine sulfoxide residues (Met-O), using respiratory chain electrons. Thus protects these proteins from oxidative-stress damage caused by reactive species of oxygen and chlorine generated by the host defense mechanisms. MsrPQ is essential for the maintenance of envelope integrity under bleach stress, rescuing a wide series of structurally unrelated periplasmic proteins from methionine oxidation, including the primary periplasmic chaperone SurA and the lipoprotein Pal. The catalytic subunit MsrP is non-stereospecific, being able to reduce both (R-) and (S-) diastereoisomers of methionine sulfoxide. This chain is Protein-methionine-sulfoxide reductase catalytic subunit MsrP, found in Salmonella dublin (strain CT_02021853).